Consider the following 62-residue polypeptide: Omega-lycotoxin-Am1e (62 aa).

The propeptide occupies 1-15 (EDEVEETLPVAEEGR). 4 disulfide bridges follow: cysteine 19–cysteine 34, cysteine 26–cysteine 39, cysteine 33–cysteine 59, and cysteine 41–cysteine 57.

It belongs to the neurotoxin omega-lctx family. As to expression, expressed by the venom gland.

The protein resides in the secreted. Modulates Cav2.1/CACNA1A voltage-gated calcium channels (P/Q-type currents) in rat cerebellar Purkinje cells and hippocampal CA1-CA3 neurons. At saturating concentrations (&gt;10 nM) decelerates activation kinetics and slightly increases peak amplitude without affecting deactivation kinetics. In vivo, does not cause death when intravenously injected into mice. In rat models, through its activity on Cav2.1/CACNA1A, has an ameliorative effect on memory defects provoked by hyperstimulation of N-methyl-D-aspartate receptors (NMDARs) in the hippocampus. The polypeptide is Omega-lycotoxin-Am1e (Alopecosa marikovskyi (Wolf spider)).